The following is a 108-amino-acid chain: Small ribosomal subunit protein uS17 (108 aa).

The disordered stretch occupies residues 1 to 26 (MREKMAEATETQASETSTRGRPKTRV). Low complexity predominate over residues 8–17 (ATETQASETS).

The protein belongs to the universal ribosomal protein uS17 family. Part of the 30S ribosomal subunit.

One of the primary rRNA binding proteins, it binds specifically to the 5'-end of 16S ribosomal RNA. The polypeptide is Small ribosomal subunit protein uS17 (Myxococcus xanthus (strain DK1622)).